The following is a 502-amino-acid chain: Glutamate--tRNA ligase (502 aa).

The short motif at 12-22 is the 'HIGH' region element; it reads PSPTGYLHVGG. Residues 259–263 carry the 'KMSKS' region motif; sequence KLSKR. ATP is bound at residue lysine 262.

The protein belongs to the class-I aminoacyl-tRNA synthetase family. Glutamate--tRNA ligase type 1 subfamily. Monomer.

Its subcellular location is the cytoplasm. It carries out the reaction tRNA(Glu) + L-glutamate + ATP = L-glutamyl-tRNA(Glu) + AMP + diphosphate. Functionally, catalyzes the attachment of glutamate to tRNA(Glu) in a two-step reaction: glutamate is first activated by ATP to form Glu-AMP and then transferred to the acceptor end of tRNA(Glu). The polypeptide is Glutamate--tRNA ligase (Chlorobium chlorochromatii (strain CaD3)).